The primary structure comprises 186 residues: Peptidyl-tRNA hydrolase (186 aa).

Tyr14 serves as a coordination point for tRNA. The active-site Proton acceptor is His19. TRNA-binding residues include Phe64, Asn66, and Asn112.

The protein belongs to the PTH family. In terms of assembly, monomer.

The protein resides in the cytoplasm. It carries out the reaction an N-acyl-L-alpha-aminoacyl-tRNA + H2O = an N-acyl-L-amino acid + a tRNA + H(+). Functionally, hydrolyzes ribosome-free peptidyl-tRNAs (with 1 or more amino acids incorporated), which drop off the ribosome during protein synthesis, or as a result of ribosome stalling. Its function is as follows. Catalyzes the release of premature peptidyl moieties from peptidyl-tRNA molecules trapped in stalled 50S ribosomal subunits, and thus maintains levels of free tRNAs and 50S ribosomes. This Listeria monocytogenes serovar 1/2a (strain ATCC BAA-679 / EGD-e) protein is Peptidyl-tRNA hydrolase.